A 371-amino-acid polypeptide reads, in one-letter code: 3-isopropylmalate dehydrogenase B (371 aa).

Position 79-93 (79-93) interacts with NAD(+); the sequence is GSKVDHIRRGLDGPE. Arg-100, Arg-110, Arg-142, and Asp-229 together coordinate substrate. Residues Asp-229, Asp-254, and Asp-258 each contribute to the Mg(2+) site. Residue 296–308 participates in NAD(+) binding; that stretch reads GSAPTIAGKNIAN.

The protein belongs to the isocitrate and isopropylmalate dehydrogenases family. As to quaternary structure, homodimer. Requires Mg(2+) as cofactor. Mn(2+) serves as cofactor.

The protein resides in the cytoplasm. It catalyses the reaction (2R,3S)-3-isopropylmalate + NAD(+) = 4-methyl-2-oxopentanoate + CO2 + NADH. The protein operates within amino-acid biosynthesis; L-leucine biosynthesis; L-leucine from 3-methyl-2-oxobutanoate: step 3/4. In terms of biological role, catalyzes the oxidation of 3-carboxy-2-hydroxy-4-methylpentanoate (3-isopropylmalate) to 3-carboxy-4-methyl-2-oxopentanoate. The product decarboxylates to 4-methyl-2 oxopentanoate. In Aspergillus niger, this protein is 3-isopropylmalate dehydrogenase B (leu2B).